A 193-amino-acid chain; its full sequence is Ion-translocating oxidoreductase complex subunit A (193 aa).

The next 6 membrane-spanning stretches (helical) occupy residues 5–25, 39–59, 67–87, 102–122, 134–154, and 171–191; these read LLLLIGTVLVNNFVLVKFLGL, IGMGLATTFVLTLASVCSYLV, LGIEYLRTMSFILVIAVVVQF, VLGIFLPLITTNCAVLGVALL, IIYGFGAAVGFSLVLILFSAM, and SIAMITAGLMSLAFMGFTGLV.

It belongs to the NqrDE/RnfAE family. As to quaternary structure, the complex is composed of six subunits: RnfA, RnfB, RnfC, RnfD, RnfE and RnfG.

The protein localises to the cell inner membrane. Functionally, part of a membrane-bound complex that couples electron transfer with translocation of ions across the membrane. This is Ion-translocating oxidoreductase complex subunit A from Aliivibrio fischeri (strain ATCC 700601 / ES114) (Vibrio fischeri).